The sequence spans 281 residues: NAD kinase (281 aa).

The active-site Proton acceptor is Asp-61. NAD(+) contacts are provided by residues 61–62, 134–135, Arg-145, Asp-164, 175–180, and Gln-234; these read DG, ND, and TAYSLS.

This sequence belongs to the NAD kinase family. A divalent metal cation serves as cofactor.

It localises to the cytoplasm. It catalyses the reaction NAD(+) + ATP = ADP + NADP(+) + H(+). Its function is as follows. Involved in the regulation of the intracellular balance of NAD and NADP, and is a key enzyme in the biosynthesis of NADP. Catalyzes specifically the phosphorylation on 2'-hydroxyl of the adenosine moiety of NAD to yield NADP. The sequence is that of NAD kinase from Clostridium botulinum (strain Loch Maree / Type A3).